A 306-amino-acid chain; its full sequence is Pantothenate kinase (306 aa).

ATP is bound at residue 91–98; it reads GSVAVGKS.

It belongs to the prokaryotic pantothenate kinase family.

Its subcellular location is the cytoplasm. The catalysed reaction is (R)-pantothenate + ATP = (R)-4'-phosphopantothenate + ADP + H(+). The protein operates within cofactor biosynthesis; coenzyme A biosynthesis; CoA from (R)-pantothenate: step 1/5. This chain is Pantothenate kinase, found in Streptococcus pneumoniae (strain Hungary19A-6).